The primary structure comprises 267 residues: Glutamate racemase (267 aa).

Substrate is bound by residues 10-11 (DS) and 42-43 (YG). The active-site Proton donor/acceptor is the Cys73. 74–75 (NT) is a substrate binding site. Cys183 functions as the Proton donor/acceptor in the catalytic mechanism. 184-185 (TH) provides a ligand contact to substrate.

This sequence belongs to the aspartate/glutamate racemases family.

The catalysed reaction is L-glutamate = D-glutamate. The protein operates within cell wall biogenesis; peptidoglycan biosynthesis. Provides the (R)-glutamate required for cell wall biosynthesis. The sequence is that of Glutamate racemase from Lactobacillus helveticus (strain DPC 4571).